Reading from the N-terminus, the 159-residue chain is MEITIVAVGKIKERYLKEGIAEYLKRLSPYARLAVIEVDDENAPENLSPAEAEKVVKKEGERILAKITPSSFVIALDLKGKNLSSEEFAHFISEKNLYGQSKLTFIIGGSLGLSREVLERADFKLSFGRMTYPHQLMRLILLEQIYRAFKIIRGEPYHK.

S-adenosyl-L-methionine-binding positions include leucine 76, glycine 108, and 127-132 (FGRMTY).

Belongs to the RNA methyltransferase RlmH family. As to quaternary structure, homodimer.

The protein resides in the cytoplasm. The catalysed reaction is pseudouridine(1915) in 23S rRNA + S-adenosyl-L-methionine = N(3)-methylpseudouridine(1915) in 23S rRNA + S-adenosyl-L-homocysteine + H(+). Functionally, specifically methylates the pseudouridine at position 1915 (m3Psi1915) in 23S rRNA. This is Ribosomal RNA large subunit methyltransferase H from Carboxydothermus hydrogenoformans (strain ATCC BAA-161 / DSM 6008 / Z-2901).